The chain runs to 557 residues: Leucine-rich glioma-inactivated protein 1 (557 aa).

An N-terminal signal peptide occupies residues 1–34 (MESESSRRMGNACIPLKRIAYFLCLFSVVLLTEG). The LRRNT domain maps to 35–72 (KKPAKPKCPAVCTCSKDNALCENARSIPRTVPPDVISL). 3 LRR repeats span residues 92 to 113 (SLQL…AFIG), 116 to 137 (HLEY…TFRG), and 140 to 161 (SLIH…IFKG). Residues 173 to 223 (NAFNCDCKLKWLVEWLGHTNATVEDIYCEGPPEYKKRKINSLSPKDFDCII) enclose the LRRCT domain. N-linked (GlcNAc...) asparagine glycosylation is present at Asn192. 7 EAR repeats span residues 225–267 (EFAK…EWDH), 271–313 (TFRN…KRDG), 317–364 (KFIK…KWNG), 366–415 (GFYS…QWSK), 419–462 (LFTN…KWGG), 464–506 (SFQD…NWDA), and 510–552 (KFVK…KHVI). The N-linked (GlcNAc...) asparagine glycan is linked to Asn277. A glycan (N-linked (GlcNAc...) asparagine) is linked at Asn422.

Oligomer. Interacts with KCNA1 within a complex containing KCNA1, KCNA4 and KCNAB1. Part of a complex containing ADAM22, DLG4/PSD95 and CACNG2 (stargazin). Can bind to ADAM11 and ADAM23. Glycosylated. As to expression, expressed in the brain (at protein level). Expressed in cerebellar cortex basket cell terminals (at protein level). Highly expressed in the dentate gyrus and CA3 field of the hippocampus.

Its subcellular location is the secreted. It is found in the synapse. It localises to the cytoplasm. The protein localises to the golgi apparatus. The protein resides in the endoplasmic reticulum. Regulates voltage-gated potassium channels assembled from KCNA1, KCNA4 and KCNAB1. It slows down channel inactivation by precluding channel closure mediated by the KCNAB1 subunit. Ligand for ADAM22 that positively regulates synaptic transmission mediated by AMPA-type glutamate receptors. Plays a role in suppressing the production of MMP1/3 through the phosphatidylinositol 3-kinase/ERK pathway. In Mus musculus (Mouse), this protein is Leucine-rich glioma-inactivated protein 1.